We begin with the raw amino-acid sequence, 93 residues long: Large ribosomal subunit protein bL27 (93 aa).

The disordered stretch occupies residues Met-1 to Gly-22.

This sequence belongs to the bacterial ribosomal protein bL27 family.

This Methylobacterium sp. (strain 4-46) protein is Large ribosomal subunit protein bL27.